Reading from the N-terminus, the 972-residue chain is 116 kDa U5 small nuclear ribonucleoprotein component (972 aa).

The residue at position 1 (M1) is an N-acetylmethionine. The tract at residues 1-53 (MDTDLYDEFGNYIGPELDSDEDDDELGRETKDLDEVDEDEDDDDVGDHDEDHP) is disordered. Acidic residues-rich tracts occupy residues 17–26 (LDSDEDDDEL) and 34–48 (DEVD…VGDH). S19 carries the phosphoserine modification. K64 is covalently cross-linked (Glycyl lysine isopeptide (Lys-Gly) (interchain with G-Cter in SUMO1); alternate). K64 participates in a covalent cross-link: Glycyl lysine isopeptide (Lys-Gly) (interchain with G-Cter in SUMO2); alternate. Phosphothreonine is present on T86. The tr-type G domain occupies 127–409 (ELIRNVTLCG…GIHLTKEELK (283 aa)). GTP contacts are provided by residues 136-143 (GHLHHGKT), 204-208 (DTPGH), and 258-261 (NKID).

Belongs to the TRAFAC class translation factor GTPase superfamily. Classic translation factor GTPase family. EF-G/EF-2 subfamily. As to quaternary structure, component of the U5 snRNP and the U4/U6-U5 tri-snRNP complex, a building block of the spliceosome. The U4/U6-U5 tri-snRNP complex is composed of the U4, U6 and U5 snRNAs and at least PRPF3, PRPF4, PRPF6, PRPF8, PRPF31, SNRNP200, TXNL4A, SNRNP40, DDX23, CD2BP2, PPIH, SNU13, EFTUD2, SART1 and USP39. Component of the pre-catalytic, catalytic and post-catalytic spliceosome complexes. Component of the minor spliceosome, which splices U12-type introns. Within this complex, interacts with CRIPT. Interacts with ERBB4 and PRPF8. Interacts with PIH1D1. Interacts with RPAP3 and URI1 in a ZNHIT2-dependent manner. Interacts with NRDE2. Interacts with FAM50A. Interacts with UBL5.

It localises to the nucleus. In terms of biological role, required for pre-mRNA splicing as component of the spliceosome, including pre-catalytic, catalytic and post-catalytic spliceosomal complexes. Component of the U5 snRNP and the U4/U6-U5 tri-snRNP complex, a building block of the spliceosome. As a component of the minor spliceosome, involved in the splicing of U12-type introns in pre-mRNAs. The sequence is that of 116 kDa U5 small nuclear ribonucleoprotein component (EFTUD2) from Bos taurus (Bovine).